The sequence spans 150 residues: uncharacterized protein (150 aa).

A helical membrane pass occupies residues 19-39; the sequence is SLGMCVILIDGLIVLTAAFVF.

It to B.subtilis YpjC, YqfU and YitT.

The protein localises to the cell membrane. This is an uncharacterized protein from Bacillus sp. (strain PS3).